Reading from the N-terminus, the 118-residue chain is Non-specific lipid-transfer protein 2 (118 aa).

The signal sequence occupies residues Met1–Gly25. 4 disulfides stabilise this stretch: Cys29/Cys76, Cys39/Cys53, Cys54/Cys99, and Cys74/Cys113.

Belongs to the plant LTP family.

Functionally, plant non-specific lipid-transfer proteins transfer phospholipids as well as galactolipids across membranes. May play a role in wax or cutin deposition in the cell walls of expanding epidermal cells and certain secretory tissues. Binds saturated fatty acids, jasmonic acid and, with highest efficiency, unsaturated fatty acids and lysolipids. This Lens culinaris (Lentil) protein is Non-specific lipid-transfer protein 2.